Reading from the N-terminus, the 161-residue chain is MKLSDIADNAGSRKKRMRIGRGIGSGKGKTGGRGGKGQTARSGVRIKGFEGGQMPLHRRLPKRGFNNIFRVEFAEINLDRLQDAIDAGSIDAKSTVNAESLVKSGVVRRAKGGVRLLGRGEIKAKLTIEVHGASKSAIAAVEKAGGTVKILAPKKDEGEAA.

The tract at residues 1-43 is disordered; sequence MKLSDIADNAGSRKKRMRIGRGIGSGKGKTGGRGGKGQTARSG. A compositionally biased stretch (gly residues) spans 21 to 37; it reads RGIGSGKGKTGGRGGKG.

This sequence belongs to the universal ribosomal protein uL15 family. In terms of assembly, part of the 50S ribosomal subunit.

Binds to the 23S rRNA. In Nitrobacter hamburgensis (strain DSM 10229 / NCIMB 13809 / X14), this protein is Large ribosomal subunit protein uL15.